We begin with the raw amino-acid sequence, 624 residues long: MNPELPPNHLDKPVDDAYDHTLGPADAEITLVEYGSYADAPSRSAHERVAELRSRFGNRMRYVFRHRPLAGSKIARRAAELVESHNNSGRFWDLHVALMSRSDKLSADDLCTIISDLKLEGNKEAGQEETAERARDRVEADIASANASGVIVTPTFFINGRRYDGPWDVRSLSEAMLGSLGHVVHAAALDFAKWAPSTGIMLLLATALAVVLSNSALGPDFNEMWEQRLGITFQHSAFELSLRHWINDGLLVIFFLVVGLEIKREFTVGHLAERQSAMLPIAAAIGGMAVPALLYLILVPPGPPMAPGSDGTDGAWSYGWGVPMATDTAFAIALIAMMGKRVPVELRVFLTAAAIVDDIGAIIVVAIFYSGELHIAYLGSAVAIAGLLALLNKGGVYRASPYVILGIVLWVFVYASGIHATLAGIILALFIPTRPPPNLRALMLQADAILTAETRRGREVMHYGPSEPALEALDAIHDRLESPAARMLRHLAPRSSFLVLPVFALANAGVVVETSVFGEHIPLMLGTATALVIGKPLGFITATVTAVRLGFATKPDAYSWRQLGGAGALAGIGFTMSLFIASQAFPEVSDYAAAKIAIFGGSILSAIIGVAILWNAQAEEEKNP.

Positions 1–164 (MNPELPPNHL…TFFINGRRYD (164 aa)) are unknown. Residues 165-624 (GPWDVRSLSE…NAQAEEEKNP (460 aa)) are na(+)/H(+) antiporter NhaA. Transmembrane regions (helical) follow at residues 199–219 (GIMLLLATALAVVLSNSALGP), 240–260 (LSLRHWINDGLLVIFFLVVGL), 279–299 (LPIAAAIGGMAVPALLYLILV), 319–339 (GWGVPMATDTAFAIALIAMMG), 348–368 (VFLTAAAIVDDIGAIIVVAIF), 371–391 (GELHIAYLGSAVAIAGLLALL), 407–427 (IVLWVFVYASGIHATLAGIIL), 497–517 (FLVLPVFALANAGVVVETSVF), 521–541 (IPLMLGTATALVIGKPLGFIT), 565–585 (GAGALAGIGFTMSLFIASQAF), and 596–616 (IAIFGGSILSAIIGVAILWNA).

This sequence belongs to the NhaA Na(+)/H(+) (TC 2.A.33) antiporter family.

It localises to the cell inner membrane. It catalyses the reaction Na(+)(in) + 2 H(+)(out) = Na(+)(out) + 2 H(+)(in). In terms of biological role, na(+)/H(+) antiporter that extrudes sodium in exchange for external protons. This is Na(+)/H(+) antiporter NhaA from Nitrosospira multiformis (strain ATCC 25196 / NCIMB 11849 / C 71).